The sequence spans 545 residues: Probable target of rapamycin complex 2 subunit BIT2 (545 aa).

Disordered regions lie at residues 1–24 (MATDLNRKRSATSGSLSVTNPNIK) and 78–166 (DGSN…GTSS). Composition is skewed to polar residues over residues 11-24 (ATSGSLSVTNPNIK), 106-130 (IGSSSSNRMEGNTTSNDSLFSSNSR), and 151-166 (RSGSKNYGTVITGTSS).

As to quaternary structure, interacts with the target of rapamycin complex 2 (TORC2) subunit TSC11 and the TORC2 effectors SLM1 and SLM2.

The polypeptide is Probable target of rapamycin complex 2 subunit BIT2 (BIT2) (Saccharomyces cerevisiae (strain ATCC 204508 / S288c) (Baker's yeast)).